We begin with the raw amino-acid sequence, 398 residues long: E3 ubiquitin-protein ligase MARCHF11 (398 aa).

A compositionally biased stretch (basic and acidic residues) spans 1-14 (MSDEGSKRGSRADS). Positions 1-158 (MSDEGSKRGS…GSGDQRSGHQ (158 aa)) are disordered. The span at 19 to 31 (PPLPPPPPPPPPG) shows a compositional bias: pro residues. 2 stretches are compositionally biased toward basic and acidic residues: residues 94–104 (EGPRRLPEVKL) and 121–130 (ACREGERRGT). The segment at 158-218 (QHQHHQPICK…ELCCYRYHVT (61 aa)) adopts an RING-CH-type zinc-finger fold. 8 residues coordinate Zn(2+): Cys166, Cys169, Cys182, Cys184, His192, Cys195, Cys208, and Cys211. 2 consecutive transmembrane segments (helical) span residues 241 to 261 (MIAV…LLWS) and 274 to 294 (ILFQ…IGLI). The short motif at 367-370 (YVLL) is the YXXL motif element. The PDZ-binding signature appears at 395–398 (VTSV).

Interacts (YXXL motif) with AP1M1. Interacts (via PDZ-binding motif) with LIN7A. Interacts with unidentified fucose glycoproteins. Predominantly expressed in testis. Present in early developing spermatids. Not present in spermatogonia, spermatocytes or somatic cells (i.e. peritubular, Leydig, and Sertoli cells). Present in early round spermatids at step 4, remains until step 11, then it decreases at steps 12-15, and diminishes after step 16 (at protein level). Also expressed at lower level in brain.

It localises to the cytoplasmic vesicle membrane. It carries out the reaction S-ubiquitinyl-[E2 ubiquitin-conjugating enzyme]-L-cysteine + [acceptor protein]-L-lysine = [E2 ubiquitin-conjugating enzyme]-L-cysteine + N(6)-ubiquitinyl-[acceptor protein]-L-lysine.. It functions in the pathway protein modification; protein ubiquitination. E3 ubiquitin-protein ligase that mediates polyubiquitination of CD4. E3 ubiquitin ligases accept ubiquitin from an E2 ubiquitin-conjugating enzyme in the form of a thioester and then directly transfer the ubiquitin to targeted substrates. May play a role in ubuquitin-dependent protein sorting in developmenting spermatids. The sequence is that of E3 ubiquitin-protein ligase MARCHF11 (Marchf11) from Rattus norvegicus (Rat).